The chain runs to 1047 residues: Carbamoyl phosphate synthase large chain (1047 aa).

The interval 1–398 (MPRRDDIHRI…ALMKAIASLD (398 aa)) is carboxyphosphate synthetic domain. ATP is bound by residues Arg129, Arg169, Gly175, Gly176, Glu208, Leu210, Glu215, Gly241, Val242, His243, Gln284, and Glu296. An ATP-grasp 1 domain is found at 133–325 (YEFLKAMGEP…IARIAAKIAA (193 aa)). Residues Gln284, Glu296, and Asn298 each contribute to the Mg(2+) site. Residues Gln284, Glu296, and Asn298 each contribute to the Mn(2+) site. The interval 399–539 (NAFSSNIRLH…YSTYEDEDET (141 aa)) is oligomerization domain. Residues 540-916 (PDLSGSIMII…ALRKSLQRSI (377 aa)) form a carbamoyl phosphate synthetic domain region. The region spanning 665-854 (SRVIEGLGIK…WVRLAVECMI (190 aa)) is the ATP-grasp 2 domain. ATP contacts are provided by Arg701, Lys738, Leu740, Glu745, Gly770, Val771, His772, Ser773, Gln813, and Glu825. Residues Gln813, Glu825, and Asn827 each coordinate Mg(2+). 3 residues coordinate Mn(2+): Gln813, Glu825, and Asn827. One can recognise an MGS-like domain in the interval 910 to 1047 (KSLQRSISSV…REIGDYLQVS (138 aa)). Positions 916-1047 (ISSVLITVRD…REIGDYLQVS (132 aa)) are allosteric domain.

Belongs to the CarB family. Composed of two chains; the small (or glutamine) chain promotes the hydrolysis of glutamine to ammonia, which is used by the large (or ammonia) chain to synthesize carbamoyl phosphate. Tetramer of heterodimers (alpha,beta)4. The cofactor is Mg(2+). Requires Mn(2+) as cofactor.

The catalysed reaction is hydrogencarbonate + L-glutamine + 2 ATP + H2O = carbamoyl phosphate + L-glutamate + 2 ADP + phosphate + 2 H(+). It catalyses the reaction hydrogencarbonate + NH4(+) + 2 ATP = carbamoyl phosphate + 2 ADP + phosphate + 2 H(+). It participates in amino-acid biosynthesis; L-arginine biosynthesis; carbamoyl phosphate from bicarbonate: step 1/1. The protein operates within pyrimidine metabolism; UMP biosynthesis via de novo pathway; (S)-dihydroorotate from bicarbonate: step 1/3. Large subunit of the glutamine-dependent carbamoyl phosphate synthetase (CPSase). CPSase catalyzes the formation of carbamoyl phosphate from the ammonia moiety of glutamine, carbonate, and phosphate donated by ATP, constituting the first step of 2 biosynthetic pathways, one leading to arginine and/or urea and the other to pyrimidine nucleotides. The large subunit (synthetase) binds the substrates ammonia (free or transferred from glutamine from the small subunit), hydrogencarbonate and ATP and carries out an ATP-coupled ligase reaction, activating hydrogencarbonate by forming carboxy phosphate which reacts with ammonia to form carbamoyl phosphate. This is Carbamoyl phosphate synthase large chain from Thermoplasma acidophilum (strain ATCC 25905 / DSM 1728 / JCM 9062 / NBRC 15155 / AMRC-C165).